The primary structure comprises 146 residues: 16.0 kDa heat shock protein, peroxisomal (146 aa).

Residues 23-143 (WASASATAAM…RPRTRPIAVS (121 aa)) enclose the sHSP domain. The Microbody targeting signal motif lies at 144 to 146 (SKL).

This sequence belongs to the small heat shock protein (HSP20) family. In terms of assembly, may form oligomeric structures.

The protein localises to the peroxisome. This chain is 16.0 kDa heat shock protein, peroxisomal (HSP16.0), found in Oryza sativa subsp. japonica (Rice).